Here is a 740-residue protein sequence, read N- to C-terminus: Vertnin (740 aa).

Disordered stretches follow at residues 485 to 506, 560 to 616, and 653 to 673; these read EAGE…RGLI, PGMQ…DQNV, and TQSQ…APGG. Residues 578–604 show a composition bias toward basic and acidic residues; it reads QKPEGRQKPEEQQKPEGRQKPEGRQKP. Residues 653–667 show a composition bias toward polar residues; it reads TQSQPHSGSLPSQTL.

This sequence belongs to the vertnin family.

The protein localises to the nucleus. Functionally, acts as a transcription factor that regulates development of thoracic vertebrae. This Mus musculus (Mouse) protein is Vertnin (Vrtn).